The primary structure comprises 2148 residues: Polyketide synthase 1 (2148 aa).

The interval 19–261 (FIFGDQSSCN…TPLAVHAPYH (243 aa)) is N-terminal acylcarrier protein transacylase domain (SAT). One can recognise a Ketosynthase family 3 (KS3) domain in the interval 394-829 (ESKIAIIGMS…GGNTALLVED (436 aa)). Residues Cys566, His701, and His745 each act as for beta-ketoacyl synthase activity in the active site. Residues 930–1236 (FVFSGQGSQY…MRNKDGWQVL (307 aa)) form a malonyl-CoA:ACP transacylase (MAT) domain region. Ser1018 serves as the catalytic For acyl/malonyl transferase activity. The product template (PT) domain stretch occupies residues 1310–1624 (TASVHRMVHE…RKVLNTAMPP (315 aa)). The N-terminal hotdog fold stretch occupies residues 1314–1447 (HRMVHESVEK…SSLHFEQPKV (134 aa)). A PKS/mFAS DH domain is found at 1314 to 1619 (HRMVHESVEK…FQGIPRKVLN (306 aa)). His1346 (proton acceptor; for dehydratase activity) is an active-site residue. A C-terminal hotdog fold region spans residues 1474–1619 (LNSRMSSGVI…FQGIPRKVLN (146 aa)). The active-site Proton donor; for dehydratase activity is the Asp1533. Positions 1619-1655 (NTAMPPPKSQNEAPVRSGPAKPAAKPPRSASSEHSGH) are disordered. Low complexity predominate over residues 1634-1650 (RSGPAKPAAKPPRSASS). The 75-residue stretch at 1678–1752 (RNPMLPVFKI…DLAAQLGLDT (75 aa)) folds into the Carrier 1 domain. O-(pantetheine 4'-phosphoryl)serine is present on Ser1712. The span at 1755 to 1790 (SDQSSGQSSSSGGLSPRSDSIGEITSSVTTPPSLSP) shows a compositional bias: low complexity. The disordered stretch occupies residues 1755 to 1796 (SDQSSGQSSSSGGLSPRSDSIGEITSSVTTPPSLSPRGSVSG). Positions 1793-1870 (SVSGSQCKDV…SFKHMFQQGH (78 aa)) constitute a Carrier 2 domain. An O-(pantetheine 4'-phosphoryl)serine modification is found at Ser1830. A thioesterase (TE) domain region spans residues 1882 to 2146 (LKQYRATSTL…ERVAAFIRST (265 aa)). The active-site For thioesterase activity is the Ser1973.

It functions in the pathway pigment biosynthesis. Functionally, polyketide synthase; part of the Pks1 gene cluster that mediates the biosynthesis of an anthraquinone derivative pigment that contributes to conidial pigmentation that provides protection from UV radiation, heat and cold stress. The polyketide synthase Pks1 produces 1-acetyl-2,4,6,8-tetrahydroxy-9,10-anthraquinone though condensation of acetyl-CoA with malonyl-CoA. The dehydratase EthD and the laccase Mlac1 further convert the anthraquinone derivative into the final conidial pigment. This Metarhizium robertsii (strain ARSEF 23 / ATCC MYA-3075) (Metarhizium anisopliae (strain ARSEF 23)) protein is Polyketide synthase 1.